Reading from the N-terminus, the 410-residue chain is 2-oxoisovalerate dehydrogenase subunit alpha (410 aa).

This sequence belongs to the BCKDHA family. As to quaternary structure, heterodimer of an alpha and a beta chain. Requires thiamine diphosphate as cofactor.

The catalysed reaction is N(6)-[(R)-lipoyl]-L-lysyl-[protein] + 3-methyl-2-oxobutanoate + H(+) = N(6)-[(R)-S(8)-2-methylpropanoyldihydrolipoyl]-L-lysyl-[protein] + CO2. Its function is as follows. The branched-chain alpha-keto dehydrogenase complex catalyzes the overall conversion of alpha-keto acids to acyl-CoA and CO(2). It contains multiple copies of three enzymatic components: branched-chain alpha-keto acid decarboxylase (E1), lipoamide acyltransferase (E2) and lipoamide dehydrogenase (E3). The chain is 2-oxoisovalerate dehydrogenase subunit alpha (bkdA1) from Pseudomonas putida (Arthrobacter siderocapsulatus).